The chain runs to 306 residues: Curved DNA-binding protein (306 aa).

One can recognise a J domain in the interval 5–69 (DYYAIMGVKP…QRRAEYDQMW (65 aa)).

It localises to the cytoplasm. It is found in the nucleoid. Its function is as follows. DNA-binding protein that preferentially recognizes a curved DNA sequence. It is probably a functional analog of DnaJ; displays overlapping activities with DnaJ, but functions under different conditions, probably acting as a molecular chaperone in an adaptive response to environmental stresses other than heat shock. Lacks autonomous chaperone activity; binds native substrates and targets them for recognition by DnaK. Its activity is inhibited by the binding of CbpM. This chain is Curved DNA-binding protein, found in Shigella sonnei (strain Ss046).